Reading from the N-terminus, the 299-residue chain is Phosphatidylinositol-3-phosphatase (299 aa).

Residues 1 to 43 (MLRGIQALSRPLTRVYRALAVIGVLAASLLASWVGAVPQVGLA) form the signal peptide.

In terms of assembly, monomer. SapM interacts with host RAB7 via its C-terminus. A metal cation serves as cofactor.

It is found in the secreted. It localises to the host cytoplasmic vesicle. The protein localises to the host phagosome. The catalysed reaction is a phosphate monoester + H2O = an alcohol + phosphate. The enzyme catalyses a 1,2-diacyl-sn-glycero-3-phospho-(1D-myo-inositol-3-phosphate) + H2O = a 1,2-diacyl-sn-glycero-3-phospho-(1D-myo-inositol) + phosphate. Phosphatase activity is inhibited in vitro by low concentrations of several heavy metals (zinc chloride, sodium molybdate, magnesium chloride, and copper sulfate) and moderately high concentrations (&gt;8 mM) of EDTA. In terms of biological role, virulence factor that plays an important role in blocking phagosome-lysosome fusion and thus participates in the intracellular survival of the pathogen. Acts as a phosphatase that dephosphorylates phosphatidylinositol 3-phosphate (PI3P), a membrane trafficking regulatory lipid essential for phagosomal acquisition of lysosomal constituents. Therefore, SapM eliminates PI3P from the phagosomal membrane by catalyzing its hydrolysis, and thus contributes to inhibition of phagosome maturation. Also interferes with autophagy: SapM blocks autophagosome-lysosome fusion in macrophages by binding to the small GTPase RAB7, which prevents RAB7 from being involved in this process and thus negatively regulates autophagy flux. In vitro, displays phosphatase activity with broad specificity; can dephosphorylate a variety of phosphoester substrates, with the highest activity against phosphoenolpyruvate, glycerophosphate, GTP, NADPH, phosphotyrosine and trehalose-6-phosphate. In contrast, the enzyme exhibits poor activity against glucose-6-phosphate, phosphothreonine, and a number of nucleotides (NADP, ATP, AMP, and GMP). The polypeptide is Phosphatidylinositol-3-phosphatase (Mycobacterium tuberculosis (strain ATCC 25618 / H37Rv)).